Reading from the N-terminus, the 496-residue chain is Aspartyl/glutamyl-tRNA(Asn/Gln) amidotransferase subunit B (496 aa).

Residues 475–496 form a disordered region; that stretch reads TGGSADPSKVNTLLREQLEDKK.

The protein belongs to the GatB/GatE family. GatB subfamily. Heterotrimer of A, B and C subunits.

It catalyses the reaction L-glutamyl-tRNA(Gln) + L-glutamine + ATP + H2O = L-glutaminyl-tRNA(Gln) + L-glutamate + ADP + phosphate + H(+). The enzyme catalyses L-aspartyl-tRNA(Asn) + L-glutamine + ATP + H2O = L-asparaginyl-tRNA(Asn) + L-glutamate + ADP + phosphate + 2 H(+). Allows the formation of correctly charged Asn-tRNA(Asn) or Gln-tRNA(Gln) through the transamidation of misacylated Asp-tRNA(Asn) or Glu-tRNA(Gln) in organisms which lack either or both of asparaginyl-tRNA or glutaminyl-tRNA synthetases. The reaction takes place in the presence of glutamine and ATP through an activated phospho-Asp-tRNA(Asn) or phospho-Glu-tRNA(Gln). In Haloquadratum walsbyi (strain DSM 16790 / HBSQ001), this protein is Aspartyl/glutamyl-tRNA(Asn/Gln) amidotransferase subunit B.